A 234-amino-acid chain; its full sequence is HTH-type transcriptional regulator MT1864 (234 aa).

Positions 15–75 (EQIEAKIVEL…LLLVDAYSDL (61 aa)) constitute an HTH tetR-type domain. Residues 38–57 (SLRAIARNLGMVSSAVYRYV) constitute a DNA-binding region (H-T-H motif).

Homodimer.

The protein resides in the cytoplasm. May participate in the regulatory network that controls the expression of MmpL lipid transporters. This is HTH-type transcriptional regulator MT1864 from Mycobacterium tuberculosis (strain CDC 1551 / Oshkosh).